The sequence spans 517 residues: Ribose import ATP-binding protein RbsA 2 (517 aa).

ABC transporter domains follow at residues 11 to 251 and 263 to 507; these read LEMR…VGRD and YDPG…ALAT. ATP is bound at residue 43–50; it reads GENGAGKS.

This sequence belongs to the ABC transporter superfamily. Ribose importer (TC 3.A.1.2.1) family. In terms of assembly, the complex is composed of an ATP-binding protein (RbsA), two transmembrane proteins (RbsC) and a solute-binding protein (RbsB).

Its subcellular location is the cell inner membrane. The catalysed reaction is D-ribose(out) + ATP + H2O = D-ribose(in) + ADP + phosphate + H(+). Its function is as follows. Part of the ABC transporter complex RbsABC involved in ribose import. Responsible for energy coupling to the transport system. The chain is Ribose import ATP-binding protein RbsA 2 from Burkholderia pseudomallei (strain 1710b).